Reading from the N-terminus, the 125-residue chain is Mediator of RNA polymerase II transcription subunit 11 (125 aa).

The protein belongs to the Mediator complex subunit 11 family. In terms of assembly, component of the Mediator complex.

The protein resides in the nucleus. Its function is as follows. Component of the Mediator complex, a coactivator involved in the regulated transcription of nearly all RNA polymerase II-dependent genes. Mediator functions as a bridge to convey information from gene-specific regulatory proteins to the basal RNA polymerase II transcription machinery. Mediator is recruited to promoters by direct interactions with regulatory proteins and serves as a scaffold for the assembly of a functional pre-initiation complex with RNA polymerase II and the general transcription factors. The sequence is that of Mediator of RNA polymerase II transcription subunit 11 (MED11) from Candida glabrata (strain ATCC 2001 / BCRC 20586 / JCM 3761 / NBRC 0622 / NRRL Y-65 / CBS 138) (Yeast).